A 43-amino-acid polypeptide reads, in one-letter code: Truncated K3L homolog (43 aa).

The protein belongs to the orthopoxvirus OPG041 family.

This chain is Truncated K3L homolog (OPG041), found in Cynomys gunnisoni (Gunnison's prairie dog).